The sequence spans 2322 residues: Protein sidekick homolog (2322 aa).

A signal peptide spans 1–26 (MNYRIFLLFCTTTVLWSVVSTQLVLG). Residues 27–2020 (KPPIFQNTGP…IPDDPFYTTW (1994 aa)) lie on the Extracellular side of the membrane. 3 Ig-like C2-type domains span residues 28–105 (PPIF…AAIS), 217–319 (PSLQ…AYLT), and 324–397 (PVLK…ADMS). Disulfide bonds link C52-C94, C247-C301, and C345-C386. N408 carries N-linked (GlcNAc...) asparagine glycosylation. Ig-like C2-type domains lie at 450-545 (PFTS…VQVN) and 548-639 (SLIE…AMLQ). Cystine bridges form between C481–C529 and C569–C623. 2 N-linked (GlcNAc...) asparagine glycosylation sites follow: N633 and N656. 13 Fibronectin type-III domains span residues 646–752 (MPER…MPQQ), 757–854 (APRN…TAEG), 859–958 (APKN…TEED), 962–1056 (AVDE…VPPE), 1060–1155 (RPSM…TLQT), 1160–1255 (PSQR…TYES), 1260–1360 (SPRN…TLED), 1364–1458 (PPES…SSVR), 1464–1567 (APAP…TLPS), 1572–1672 (QPIS…VGYS), 1674–1774 (PKRN…LEDK), 1777–1873 (PVGV…SKDG), and 1908–2010 (QAKR…VPES). The disordered stretch occupies residues 732–762 (SNKHGPGKPSLPSSSVTMPQQPPSAAPRNVA). N-linked (GlcNAc...) asparagine glycosylation is found at N808, N869, N933, and N1017. Positions 1040–1049 (GDGPVEETKF) are enriched in basic and acidic residues. Residues 1040–1060 (GDGPVEETKFESGVPPELPGR) form a disordered region. N1108 carries an N-linked (GlcNAc...) asparagine glycan. The disordered stretch occupies residues 1139 to 1163 (GRGAPSEPSRTFETLQTNPETPSQR). Polar residues predominate over residues 1146-1163 (PSRTFETLQTNPETPSQR). N-linked (GlcNAc...) asparagine glycans are attached at residues N1615, N1677, and N1864. Residues 1916–1965 (EETENGYVSQRPRRNEIRGAKSAAQTSASSNSNRPTHPIGEWITLRPTDG) are disordered. The segment covering 1935 to 1947 (AKSAAQTSASSNS) has biased composition (low complexity). The helical transmembrane segment at 2021-2041 (WFMALVAMAAFVLIVIIIAIL) threads the bilayer. The Cytoplasmic segment spans residues 2042-2322 (CVTGSSAKYR…NLTAGFSSFV (281 aa)). Disordered stretches follow at residues 2081 to 2114 (NMTR…SVLG), 2167 to 2254 (YVVS…ADDI), and 2276 to 2322 (MVRA…SSFV). Over residues 2092–2101 (PGTTQSWLSD) the composition is skewed to polar residues. Over residues 2207 to 2223 (PSSSGGSQPQGSPQQQQ) the composition is skewed to low complexity. A compositionally biased stretch (acidic residues) spans 2227 to 2238 (DSFDEEDDVDDD). 2 stretches are compositionally biased toward polar residues: residues 2282 to 2302 (LTNQ…STSE) and 2310 to 2322 (ATPN…SSFV).

The protein belongs to the sidekick family.

Its subcellular location is the membrane. Cell adhesion protein. The sequence is that of Protein sidekick homolog (rig-4) from Caenorhabditis briggsae.